A 1110-amino-acid polypeptide reads, in one-letter code: Envelopment polyprotein (1110 aa).

Residues 1-8 (MALKETDA) constitute a propeptide that is removed on maturation. At 1–290 (MALKETDAKI…KYSKNIYKQT (290 aa)) the chain is on the lumenal side. The short motif at 14 to 16 (RGD) is the Cell attachment site element. Asn46 and Asn92 each carry an N-linked (GlcNAc...) asparagine; by host glycan. Cystine bridges form between Cys90–Cys121 and Cys98–Cys132. A non-covalent dimerization region spans residues 153-171 (IDNKRKLSIGTKFYIIESL). The N-linked (GlcNAc...) asparagine; by host glycan is linked to Asn186. A disulfide bridge links Cys200 with Cys261. Residues 291–342 (ACINFSWFRLIMIALIVYFPIRYLVNKTSKTLFYGYDLLGLITYPILLLINY) form a helical membrane-spanning segment. Residues 343 to 459 (LWSYFPLKCK…VPGCDRFVTN (117 aa)) are Cytoplasmic-facing. The Lumenal portion of the chain corresponds to 460 to 1044 (RYDKCPEKDQ…HFGSFFDTVR (585 aa)). 3 N-linked (GlcNAc...) asparagine; by host glycosylation sites follow: Asn566, Asn582, and Asn957. The chain crosses the membrane as a helical span at residues 1045-1065 (VVLLILFVFALAYLCSIVATM). Residues 1066–1110 (CRGYVRNKSYKTKYIEDTNDYSLVSTSSGKDTITRRRPPLDFSGI) are Cytoplasmic-facing. A disordered region spans residues 1091–1110 (TSSGKDTITRRRPPLDFSGI).

It belongs to the tospovirus envelope glycoprotein family. Homodimer; disulfide-linked. Heterodimer with Glycoprotein C. Interacts with nucleoprotein. In terms of assembly, heterodimer with Glycoprotein N. Interacts with nucleoprotein. In terms of processing, specific enzymatic cleavages in vivo yield mature proteins including Glycoprotein N and Glycoprotein C. Post-translationally, glycosylated with O-linked glycans. Glycosylation is essential for proper subcellular location. Cleaved at acidic pH.

The protein localises to the virion membrane. Its subcellular location is the host Golgi apparatus membrane. It is found in the host endoplasmic reticulum membrane. In terms of biological role, forms the spikes present at the surface of the virion together with Glycoprotein C. They are able to attach the virion to a cell receptor and to promote fusion of membranes after endocytosis of the virion. Plays a role in virus binding and/or entry into the vector midgut. Its function is as follows. Forms the spikes present at the surface of the virion together with Glycoprotein N. They are able to attach the virion to a cell receptor and to promote fusion of membranes after endocytosis of the virion. Probable class II fusion protein. This chain is Envelopment polyprotein (GP), found in Impatiens necrotic spot virus (INSV).